Reading from the N-terminus, the 197-residue chain is RIP-like protein (197 aa).

The interval 1 to 20 is disordered; sequence MNSTQSPVYRTSVEQKRHAQ. Residues 122 to 191 form an RIP-type zinc finger; the sequence is CPVCQIKNLR…GQLYDMCGSC (70 aa).

The chain is RIP-like protein (Ripalpha) from Drosophila melanogaster (Fruit fly).